The following is a 341-amino-acid chain: Serpentine receptor class alpha-28 (341 aa).

Transmembrane regions (helical) follow at residues 25 to 45 (FIISIIIISFFTTTKSVRVLL), 57 to 77 (LLFSAIINGIIHQCVTAVIRL), 107 to 129 (YYYTNLFSSFCCFSLFLDRLFSF), 142 to 162 (ASIVLILSQIVLPIGPLYWVF), 188 to 208 (VNNIRICVLIVLLFFAIFLYI), 242 to 262 (IVIFSQILCVGPTSSITSVFI), and 275 to 295 (LIISYLTGLTYSNFLLPLIIL).

It belongs to the nematode receptor-like protein sra family.

The protein resides in the membrane. In Caenorhabditis elegans, this protein is Serpentine receptor class alpha-28 (sra-28).